The sequence spans 200 residues: Large ribosomal subunit protein uL4 (200 aa).

A disordered region spans residues 38 to 65 (GRQGSKAQKTRSEVSGGGKKPWRQKGTG).

It belongs to the universal ribosomal protein uL4 family. Part of the 50S ribosomal subunit.

In terms of biological role, one of the primary rRNA binding proteins, this protein initially binds near the 5'-end of the 23S rRNA. It is important during the early stages of 50S assembly. It makes multiple contacts with different domains of the 23S rRNA in the assembled 50S subunit and ribosome. Its function is as follows. Forms part of the polypeptide exit tunnel. The sequence is that of Large ribosomal subunit protein uL4 from Pseudomonas aeruginosa (strain LESB58).